The chain runs to 222 residues: Transcriptional regulatory protein BasR (222 aa).

A Response regulatory domain is found at 2-116; it reads KILIVEDDTL…ELHARIRALL (115 aa). At Asp-51 the chain carries 4-aspartylphosphate. The ompR/PhoB-type DNA-binding region spans 124–218; the sequence is ESELIVGNLT…VRGFGYMLVA (95 aa).

In terms of assembly, homodimer. In terms of processing, phosphorylated by BasS.

The protein localises to the cytoplasm. Its function is as follows. Member of the two-component regulatory system BasS/BasR. BasR induces the transcription of the ugd, ais, arnBCADTEF and eptA-basRS loci, all involved in resistance to polymyxin. The polypeptide is Transcriptional regulatory protein BasR (basR) (Escherichia coli (strain K12)).